We begin with the raw amino-acid sequence, 255 residues long: Ribosome maturation factor RimP (255 aa).

Residues leucine 177–histidine 255 form a disordered region. Acidic residues predominate over residues aspartate 186–valine 202. Over residues proline 216–valine 230 the composition is skewed to basic and acidic residues.

The protein belongs to the RimP family.

Its subcellular location is the cytoplasm. In terms of biological role, required for maturation of 30S ribosomal subunits. The chain is Ribosome maturation factor RimP from Methylorubrum populi (strain ATCC BAA-705 / NCIMB 13946 / BJ001) (Methylobacterium populi).